The chain runs to 198 residues: Probable GTP-binding protein EngB (198 aa).

An EngB-type G domain is found at 22 to 195 (NRNEVAFVGR…IDKLFLEFAT (174 aa)). GTP-binding positions include 30–37 (GRSNVGKS), 57–61 (GKTRL), 75–78 (DLPG), 142–145 (TKSD), and 174–176 (YSS). Residues S37 and T59 each coordinate Mg(2+).

This sequence belongs to the TRAFAC class TrmE-Era-EngA-EngB-Septin-like GTPase superfamily. EngB GTPase family. Mg(2+) serves as cofactor.

Necessary for normal cell division and for the maintenance of normal septation. This Clostridium botulinum (strain Alaska E43 / Type E3) protein is Probable GTP-binding protein EngB.